A 208-amino-acid polypeptide reads, in one-letter code: Imidazole glycerol phosphate synthase subunit HisH (208 aa).

One can recognise a Glutamine amidotransferase type-1 domain in the interval M1 to S206. C79 functions as the Nucleophile in the catalytic mechanism. Residues H181 and E183 contribute to the active site.

In terms of assembly, heterodimer of HisH and HisF.

It localises to the cytoplasm. The enzyme catalyses 5-[(5-phospho-1-deoxy-D-ribulos-1-ylimino)methylamino]-1-(5-phospho-beta-D-ribosyl)imidazole-4-carboxamide + L-glutamine = D-erythro-1-(imidazol-4-yl)glycerol 3-phosphate + 5-amino-1-(5-phospho-beta-D-ribosyl)imidazole-4-carboxamide + L-glutamate + H(+). It catalyses the reaction L-glutamine + H2O = L-glutamate + NH4(+). The protein operates within amino-acid biosynthesis; L-histidine biosynthesis; L-histidine from 5-phospho-alpha-D-ribose 1-diphosphate: step 5/9. In terms of biological role, IGPS catalyzes the conversion of PRFAR and glutamine to IGP, AICAR and glutamate. The HisH subunit catalyzes the hydrolysis of glutamine to glutamate and ammonia as part of the synthesis of IGP and AICAR. The resulting ammonia molecule is channeled to the active site of HisF. The sequence is that of Imidazole glycerol phosphate synthase subunit HisH from Listeria monocytogenes serovar 1/2a (strain ATCC BAA-679 / EGD-e).